A 999-amino-acid chain; its full sequence is MAGPVSLRELLMGASAWTSSESPEGSPTEGGGSAAGGPEPPWREDEICVVGIFGKTALRLNSEKFSLVNTVCDRQVFPLFRHQDPGDSGAGIRTEAGAVGEAGGAGDPGAGAGAGAGAGAGDPVRGGVTAAEGNRTEPGSQDYSLLQAYYNQESKVLYLLLTSICDNSQLLRACRALQSGEAGGGLSLPHAEAHEFWKHQEKVQCLSLLYLFSVCHILLLVHPTCSFDITYDRVFRALDGLRQKVLPLLKTAIKDCPVGKDWKLNCRPCPPRLLFLFQLNGALKVEPPRNQDPAHPDKPKKHSPKRRLQHALEDQIYRIFRKSRVLTNQSINCLFTVPANQAFVYIVPGSQEEDPVGMLLDQLKSHCTVKDPESLLVPAPLSGSRRYQVMRQHSRQQLSFHTDTSSSSSSGQLVDFTLREFLWQHVELVLSKKGFDDSVGRNPQPSHFELPTYQKWISAASKLYEVAIDGKEEDPASPTGELTSKILSSIKVLEGFLDIDTKFSENRCQKALPMAHSAYQSNLPHNYTMTVHKNQLAQALRVYSQHARGPAFHKYAMQLHEDCYKFWSNGHQLCEERSLTDQHCVHKFHSLPKSGEKPEADRNPPVLYHNSRARSTGACNCGRKQAPRDDPFDIKAANYDFYQLLEEKCCGKLDHINFPVFEPSTPDPAPAKNESSPAPPDADADKLKEKEPQTQGESTSLSLALSLGQSTDSLGTYPADPQAGGDNPEVHGQGEVKTEKRPNLVDRQASTVEYLPGMLHSNCPKGLLPKFSSWSLVKLGPAKSYNFHTGLDQQGFIPGTNYLMPWDIVIRTRAEDEGDLDTNSWPAPNKAVPGKRSAVVMGRGRRRDDIARAFVGFEYEDSRGRRFMCSGPDKVMKVMGSGPKESALKALNSDMPLYILSSSQGRGLKPHYAQLMRLFVVVPDAPLQIILTPQVRPGPPPCPVFYPEKQEITLPPDGLWVLRFPYAYVTERGPCFPPKENVQLMSYKVLRGVLKAVTQ.

Disordered stretches follow at residues 15-42, 83-136, and 287-307; these read SAWT…EPPW, QDPG…GNRT, and PPRN…PKRR. The span at 18-27 shows a compositional bias: low complexity; it reads TSSESPEGSP. Residues 100–120 show a composition bias toward gly residues; that stretch reads GEAGGAGDPGAGAGAGAGAGA. Residues 287 to 297 are compositionally biased toward basic and acidic residues; it reads PPRNQDPAHPD. Residues 298-307 show a composition bias toward basic residues; that stretch reads KPKKHSPKRR. Phosphoserine is present on residues serine 477 and serine 676. The tract at residues 661–734 is disordered; that stretch reads FEPSTPDPAP…GDNPEVHGQG (74 aa). The segment covering 683–692 has biased composition (basic and acidic residues); the sequence is DADKLKEKEP. The segment covering 693–714 has biased composition (polar residues); it reads QTQGESTSLSLALSLGQSTDSL. Phosphoserine occurs at positions 750 and 903. At arginine 906 the chain carries Omega-N-methylarginine.

The protein belongs to the SMG8 family. As to quaternary structure, component of the SMG1C complex composed of SMG1, SMG8 and SMG9; the recruitment of SMG8 to SMG1 N-terminus induces a large conformational change in the SMG1 C-terminal head domain containing the catalytic domain. Forms heterodimers with SMG9; this assembly form may represent a SMG1C intermediate form. Phosphorylated by SMG1.

Functionally, involved in nonsense-mediated decay (NMD) of mRNAs containing premature stop codons. Is recruited by release factors to stalled ribosomes together with SMG1 and SMG9 (forming the SMG1C protein kinase complex) and, in the SMG1C complex, is required to mediate the recruitment of SMG1 to the ribosome:SURF complex and to suppress SMG1 kinase activity until the ribosome:SURF complex locates the exon junction complex (EJC). Acts as a regulator of kinase activity. The sequence is that of Nonsense-mediated mRNA decay factor SMG8 (SMG8) from Bos taurus (Bovine).